The chain runs to 389 residues: Lipid-A-disaccharide synthase (389 aa).

It belongs to the LpxB family.

The catalysed reaction is a lipid X + a UDP-2-N,3-O-bis[(3R)-3-hydroxyacyl]-alpha-D-glucosamine = a lipid A disaccharide + UDP + H(+). It functions in the pathway bacterial outer membrane biogenesis; LPS lipid A biosynthesis. In terms of biological role, condensation of UDP-2,3-diacylglucosamine and 2,3-diacylglucosamine-1-phosphate to form lipid A disaccharide, a precursor of lipid A, a phosphorylated glycolipid that anchors the lipopolysaccharide to the outer membrane of the cell. In Burkholderia cenocepacia (strain ATCC BAA-245 / DSM 16553 / LMG 16656 / NCTC 13227 / J2315 / CF5610) (Burkholderia cepacia (strain J2315)), this protein is Lipid-A-disaccharide synthase.